The following is a 111-amino-acid chain: Entry-fusion complex protein OPG086 (111 aa).

Residues 1–21 (MASLLYFILFLLFVCISYYFT) traverse the membrane as a helical; Signal-anchor segment. At 22–111 (YYPTNKLQAA…TLLPILLLSK (90 aa)) the chain is on the virion surface side.

The protein belongs to the orthopoxvirus OPG086 family. In terms of assembly, interacts with OPG099/L5. Component of the entry fusion complex (EFC) composed of OPG053, OPG076, OPG086, OPG094, OPG095, OPG099, OPG107, OPG143, OPG104, OPG147 and OPG155. Except for OPG095 and OPG053, each of the EFC proteins is required for assembly or stability of the complex. Post-translationally, unglycosylated because produced in viral factories instead of the classic ER -Golgi route.

It is found in the virion membrane. Its function is as follows. Component of the entry fusion complex (EFC), which consists of 11 proteins. During cell infection, this complex mediates entry of the virion core into the host cytoplasm by a two-step mechanism consisting of lipid mixing of the viral and cellular membranes and subsequent pore formation. The chain is Entry-fusion complex protein OPG086 (OPG086) from Variola virus (isolate Human/India/Ind3/1967) (VARV).